The sequence spans 314 residues: R2-like ligand binding oxidase (314 aa).

Mn(2+) is bound by residues Glu-68, Glu-101, and His-104. Positions 71–162 form a cross-link, 3-(O4'-tyrosyl)-valine (Val-Tyr); sequence VTEDIQPFMS…AAQVRASVTY (92 aa). Position 101 (Glu-101) interacts with Fe cation. Positions 167, 202, and 205 each coordinate Fe cation.

The protein belongs to the ribonucleoside diphosphate reductase small chain family. R2-like ligand binding oxidase subfamily. Homodimer. It depends on Fe cation as a cofactor. Requires Mn(2+) as cofactor.

In terms of biological role, probable oxidase that might be involved in lipid metabolism. The chain is R2-like ligand binding oxidase from Mycobacterium bovis (strain ATCC BAA-935 / AF2122/97).